The chain runs to 337 residues: DNA-directed RNA polymerase subunit alpha (337 aa).

The tract at residues 1–233 is alpha N-terminal domain (alpha-NTD); sequence MIQKNWQELI…DQLSIFVNFE (233 aa). An alpha C-terminal domain (alpha-CTD) region spans residues 249-337; sequence FNPALLKKVD…DLAKRYEDQY (89 aa).

It belongs to the RNA polymerase alpha chain family. Homodimer. The RNAP catalytic core consists of 2 alpha, 1 beta, 1 beta' and 1 omega subunit. When a sigma factor is associated with the core the holoenzyme is formed, which can initiate transcription.

The catalysed reaction is RNA(n) + a ribonucleoside 5'-triphosphate = RNA(n+1) + diphosphate. Functionally, DNA-dependent RNA polymerase catalyzes the transcription of DNA into RNA using the four ribonucleoside triphosphates as substrates. This is DNA-directed RNA polymerase subunit alpha from Brucella abortus (strain S19).